We begin with the raw amino-acid sequence, 523 residues long: Frizzled-2 (523 aa).

One can recognise an FZ domain in the interval 1 to 120 (PDHGFCQPIS…HGAEQICVGQ (120 aa)). Topologically, residues 1-205 (PDHGFCQPIS…EDEIRFARVW (205 aa)) are extracellular. Cystine bridges form between cysteine 6/cysteine 67, cysteine 14/cysteine 60, cysteine 51/cysteine 88, cysteine 77/cysteine 117, and cysteine 81/cysteine 105. Asparagine 20 carries N-linked (GlcNAc...) asparagine glycosylation. An N-linked (GlcNAc...) asparagine glycan is attached at asparagine 121. The chain crosses the membrane as a helical span at residues 206-226 (ILVWSVLCCASTFFTVTTYLV). Residues 227–237 (DMQRFRYPERP) lie on the Cytoplasmic side of the membrane. Residues 238–258 (IIFLSGCYTMVSVAYIAGFVL) traverse the membrane as a helical segment. The Extracellular segment spans residues 259-285 (EERVVCNERFQEDGYRTVVQGTKKEGC). The chain crosses the membrane as a helical span at residues 286–306 (TILFMMLYFFSMASSIWWVIL). The Cytoplasmic segment spans residues 307-328 (SLTWFLAAGMKWGHEAIEANSQ). The helical transmembrane segment at 329–349 (YFHLAAWAVPAVKTITILAMG) threads the bilayer. Residues 350–372 (QIDGDLLSGVCFVGLNGIDPLRG) lie on the Extracellular side of the membrane. Residues 373–393 (FVLAPLFVYLFIGTSFLLAGF) form a helical membrane-spanning segment. The Cytoplasmic portion of the chain corresponds to 394–419 (VSLFRIRTIMKHGGTKTEKLERLMVR). Residues 420 to 440 (IGVFSVLYTVPATIVIACYFY) traverse the membrane as a helical segment. The Extracellular portion of the chain corresponds to 441-477 (EQAFRQHWERSWISQHCKSLAIPCPLHFTPRMTPDFT). The chain crosses the membrane as a helical span at residues 478–498 (VYMIKYLMTLIVGITSGFWIF). Residues 499–523 (SGKTLHSWRKFYTRLTNSRQGETTV) lie on the Cytoplasmic side of the membrane. Residues 501 to 506 (KTLHSW) carry the Lys-Thr-X-X-X-Trp motif, mediates interaction with the PDZ domain of Dvl family members motif. The PDZ-binding motif lies at 521–523 (TTV).

It belongs to the G-protein coupled receptor Fz/Smo family. In terms of tissue distribution, expressed in the developing head and limbs. Expressed broadly in cranial ectoderm. Also expressed in the developing somites (dermomyotome) and in other cranial placodes, including the olfactory, lens, and otic placodes (rostral rim of the vesicle).

Its subcellular location is the membrane. The protein localises to the cell membrane. Functionally, receptor for Wnt proteins. Most of frizzled receptors are coupled to the beta-catenin canonical signaling pathway, which leads to the activation of disheveled proteins, inhibition of GSK-3 kinase, nuclear accumulation of beta-catenin and activation of Wnt target genes. A second signaling pathway involving PKC and calcium fluxes has been seen for some family members, but it is not yet clear if it represents a distinct pathway or if it can be integrated in the canonical pathway, as PKC seems to be required for Wnt-mediated inactivation of GSK-3 kinase. Both pathways seem to involve interactions with G-proteins. May be involved in transduction and intercellular transmission of polarity information during tissue morphogenesis and/or in differentiated tissues. This is Frizzled-2 (FZD2) from Gallus gallus (Chicken).